We begin with the raw amino-acid sequence, 177 residues long: Cell division inhibitor SulA (177 aa).

The tract at residues 112 to 118 is ftsZ binding; that stretch reads ALASGNY. The interval 170 to 177 is lon protease binding; sequence KIHSIHYH.

This sequence belongs to the SulA family. Interacts with FtsZ. Is rapidly cleaved and degraded by the Lon protease once DNA damage is repaired.

In terms of biological role, component of the SOS system and an inhibitor of cell division. Accumulation of SulA causes rapid cessation of cell division and the appearance of long, non-septate filaments. In the presence of GTP, binds a polymerization-competent form of FtsZ in a 1:1 ratio, thus inhibiting FtsZ polymerization and therefore preventing it from participating in the assembly of the Z ring. This mechanism prevents the premature segregation of damaged DNA to daughter cells during cell division. In Photorhabdus laumondii subsp. laumondii (strain DSM 15139 / CIP 105565 / TT01) (Photorhabdus luminescens subsp. laumondii), this protein is Cell division inhibitor SulA.